The chain runs to 201 residues: uncharacterized protein (201 aa).

The N-terminal stretch at 1–28 (MMTFKNLRYGLSSSVVLAASLFSVLSYA) is a signal peptide.

The protein belongs to the fimbrial protein family.

It localises to the fimbrium. Its function is as follows. Part of the yadCKLM-htrE-yadVN fimbrial operon. Could contribute to adhesion to various surfaces in specific environmental niches. This is an uncharacterized protein from Escherichia coli (strain K12).